We begin with the raw amino-acid sequence, 563 residues long: Eukaryotic translation initiation factor 3 subunit D-1 (563 aa).

Residues Val98–Ser167 form a disordered region. The segment covering Lys100–Asn121 has biased composition (basic residues). Thr128 carries the post-translational modification Phosphothreonine. The interval Glu291 to Pro305 is RNA gate.

The protein belongs to the eIF-3 subunit D family. In terms of assembly, component of the eukaryotic translation initiation factor 3 (eIF-3) complex. The eIF-3 complex interacts with pix.

Its subcellular location is the cytoplasm. Its function is as follows. mRNA cap-binding component of the eukaryotic translation initiation factor 3 (eIF-3) complex, which is involved in protein synthesis of a specialized repertoire of mRNAs and, together with other initiation factors, stimulates binding of mRNA and methionyl-tRNAi to the 40S ribosome. The eIF-3 complex specifically targets and initiates translation of a subset of mRNAs involved in cell proliferation. In the eIF-3 complex, eif3d specifically recognizes and binds the 7-methylguanosine cap of a subset of mRNAs. This Drosophila virilis (Fruit fly) protein is Eukaryotic translation initiation factor 3 subunit D-1.